The following is a 505-amino-acid chain: ATP synthase subunit alpha (505 aa).

An ATP-binding site is contributed by 169 to 176 (GDRKTGKT).

This sequence belongs to the ATPase alpha/beta chains family. In terms of assembly, F-type ATPases have 2 components, CF(1) - the catalytic core - and CF(0) - the membrane proton channel. CF(1) has five subunits: alpha(3), beta(3), gamma(1), delta(1), epsilon(1). CF(0) has three main subunits: a(1), b(2) and c(9-12). The alpha and beta chains form an alternating ring which encloses part of the gamma chain. CF(1) is attached to CF(0) by a central stalk formed by the gamma and epsilon chains, while a peripheral stalk is formed by the delta and b chains.

Its subcellular location is the cell membrane. It catalyses the reaction ATP + H2O + 4 H(+)(in) = ADP + phosphate + 5 H(+)(out). Functionally, produces ATP from ADP in the presence of a proton gradient across the membrane. The alpha chain is a regulatory subunit. In Pediococcus pentosaceus (strain ATCC 25745 / CCUG 21536 / LMG 10740 / 183-1w), this protein is ATP synthase subunit alpha.